The chain runs to 342 residues: Apurinic-apyrimidinic endonuclease 1 (342 aa).

8 residues coordinate Zn(2+): H61, E136, D170, H173, H207, D220, H222, and E252. The segment covering 299–310 has biased composition (basic and acidic residues); that stretch reads HLNKFEKKEAKK. A disordered region spans residues 299–342; sequence HLNKFEKKEAKKDRKKKSKDGDQTTLLLRKKQKLGNAEVKSLDE.

The protein belongs to the AP endonuclease 2 family. It depends on Zn(2+) as a cofactor.

It localises to the nucleus. Its function is as follows. DNA repair enzyme that cleaves apurinic/apyrimidinic (AP) sites and removes 3'-blocking groups present at single strand breaks of damaged DNA. Provides back-up AP endonuclease (APE) activity to apn2 together with uve1. The protein is Apurinic-apyrimidinic endonuclease 1 (apn1) of Schizosaccharomyces pombe (strain 972 / ATCC 24843) (Fission yeast).